The primary structure comprises 190 residues: Potassium-transporting ATPase KdpC subunit (190 aa).

Residues 9-29 traverse the membrane as a helical segment; the sequence is VMFILFTIICGGIYPSVVTGI.

The protein belongs to the KdpC family. In terms of assembly, the system is composed of three essential subunits: KdpA, KdpB and KdpC.

Its subcellular location is the cell inner membrane. Part of the high-affinity ATP-driven potassium transport (or Kdp) system, which catalyzes the hydrolysis of ATP coupled with the electrogenic transport of potassium into the cytoplasm. This subunit acts as a catalytic chaperone that increases the ATP-binding affinity of the ATP-hydrolyzing subunit KdpB by the formation of a transient KdpB/KdpC/ATP ternary complex. The polypeptide is Potassium-transporting ATPase KdpC subunit (Citrifermentans bemidjiense (strain ATCC BAA-1014 / DSM 16622 / JCM 12645 / Bem) (Geobacter bemidjiensis)).